We begin with the raw amino-acid sequence, 303 residues long: Zinc transporter ZIP9-B (303 aa).

Residues 7-27 (ISLLSLAMLVGCYVSGIIPLA) form a helical membrane-spanning segment. N-linked (GlcNAc...) asparagine glycosylation occurs at asparagine 29. 5 helical membrane passes run 35–55 (LKLV…AVIV), 102–122 (AYIG…DQIG), 142–162 (ITTT…LGAA), 172–192 (LIVF…LVSF), and 206–226 (HLLV…LGLS). The N-linked (GlcNAc...) asparagine glycan is linked to asparagine 237. The next 2 helical transmembrane spans lie at 240–260 (GVAM…HVLP) and 282–302 (LEVC…IGHQ).

The protein belongs to the ZIP transporter (TC 2.A.5) family.

It localises to the golgi apparatus. Its subcellular location is the trans-Golgi network membrane. It is found in the cell membrane. The protein localises to the cytoplasm. The protein resides in the perinuclear region. It localises to the mitochondrion. Its subcellular location is the nucleus. The enzyme catalyses Zn(2+)(in) = Zn(2+)(out). Functionally, transports zinc ions across cell and organelle membranes into the cytoplasm and regulates intracellular zinc homeostasis. Participates in the zinc ions efflux out of the secretory compartments. Regulates intracellular zinc level, resulting in the enhancement of AKT1 and MAPK3/MAPK1 (Erk1/2) phosphorylation in response to the BCR activation. Also functions as a membrane androgen receptor that mediates, through a G protein, the non-classical androgen signaling pathway, characterized by the activation of MAPK3/MAPK1 (Erk1/2) and transcription factors CREB1 or ATF1. Moreover, has dual functions as a membrane-bound androgen receptor and as an androgen-dependent zinc transporter both of which are mediated through an inhibitory G protein (Gi) that mediates both MAP kinase and zinc signaling leading to the androgen-dependent apoptotic process. The protein is Zinc transporter ZIP9-B (slc39a9-b) of Xenopus laevis (African clawed frog).